Consider the following 105-residue polypeptide: Probable tetrachloroethene reductive dehalogenase membrane anchor protein (105 aa).

3 helical membrane-spanning segments follow: residues 3 to 23 (IYDV…QYGI), 35 to 55 (IPLQ…LAWG), and 66 to 86 (AIGM…IITY).

The protein belongs to the PceB family.

Its subcellular location is the cell membrane. Its function is as follows. May act as a membrane anchor for the tetrachloroethene reductive dehalogenase PceA. In Dehalobacter restrictus (strain DSM 9455 / PER-K23), this protein is Probable tetrachloroethene reductive dehalogenase membrane anchor protein.